A 496-amino-acid polypeptide reads, in one-letter code: Galactan beta-1,4-galactosyltransferase GALS1 (496 aa).

The helical transmembrane segment at 22–42 threads the bilayer; the sequence is IIATLLALSLVMIVWNLPPYY. Positions 232–464 constitute a GT92 domain; that stretch reads DYLYCGSSLY…AKKKVTLYNK (233 aa).

Belongs to the glycosyltransferase 92 family. Expressed in root vasculature, mature leaves, trichomes, flowers, siliques and seeds.

Its subcellular location is the golgi apparatus membrane. Functionally, involved in the biosynthesis of beta-1,4-galactan. Can transfer galactose residues from UDP-galactose to beta-1,4-galactopentaose in vitro. Forms specifically beta-1,4-galactosyl linkages and can add successive beta-1,4-galactosyl residues to the acceptor. Beta-1,4-galactans are abundant polysaccharides in plant cell walls and are found as side-chain of rhamnogalacturonan I, which is a major component of pectin. This chain is Galactan beta-1,4-galactosyltransferase GALS1, found in Arabidopsis thaliana (Mouse-ear cress).